Consider the following 474-residue polypeptide: GTPase Der (474 aa).

EngA-type G domains are found at residues 2–166 and 212–385; these read LRIA…NVPE and LKIA…TTVS. GTP-binding positions include 8-15, 55-59, 118-121, 218-225, 265-269, and 330-333; these read GRPNVGKS, DTGGV, NKAD, DTAGL, and NKWD. The KH-like domain occupies 386–470; it reads SKVPTPVVNK…PFDLEFKEKT (85 aa).

It belongs to the TRAFAC class TrmE-Era-EngA-EngB-Septin-like GTPase superfamily. EngA (Der) GTPase family. Associates with the 50S ribosomal subunit.

GTPase that plays an essential role in the late steps of ribosome biogenesis. The polypeptide is GTPase Der (Chlamydia abortus (strain DSM 27085 / S26/3) (Chlamydophila abortus)).